Reading from the N-terminus, the 396-residue chain is UPF0046 protein T07D4.2 (396 aa).

The tract at residues 73 to 94 is disordered; it reads SRRGSIASGIPMDKKTRRKLSN.

Belongs to the UPF0046 family.

This is UPF0046 protein T07D4.2 from Caenorhabditis elegans.